The primary structure comprises 167 residues: UPF0303 protein mlr5144 (167 aa).

The protein belongs to the UPF0303 family.

The polypeptide is UPF0303 protein mlr5144 (Mesorhizobium japonicum (strain LMG 29417 / CECT 9101 / MAFF 303099) (Mesorhizobium loti (strain MAFF 303099))).